The chain runs to 267 residues: Putative transcription factor Ovo-like 1 (267 aa).

4 consecutive C2H2-type zinc fingers follow at residues 118 to 140, 146 to 168, 174 to 197, and 213 to 235; these read FTCR…MKCH, HLCT…VRTH, YKCS…KKIH, and YVCE…LKEH.

In terms of tissue distribution, expressed in fetal kidney, and also in adult pancreas and placenta. Not expressed in intestine, peripheral blood lymphocytes and ovary.

Its subcellular location is the nucleus. Its function is as follows. Putative transcription factor. Involved in hair formation and spermatogenesis. May function in the differentiation and/or maintenance of the urogenital system. The protein is Putative transcription factor Ovo-like 1 (OVOL1) of Homo sapiens (Human).